A 211-amino-acid polypeptide reads, in one-letter code: MSKVLFIKASPLPNEVSRSSQVAATFIDEYKAKNPSDTVEELVLYNTEVPLLDLELMTAGRELQAGKAFTDLAPDVQKRLNAYNALTEQFLAADKYVFVFPLWNLGIPPLLKAYVDTFVIAGKSFRYTEHGPEALLKGKKAILIHGSGGIYSAGPTSSFTHGEPYLRTILQFIGIDVVPSIFVEGIDHNPSKEAEIVAAAKAVAHESAAEF.

FMN contacts are provided by residues serine 10 and 17 to 19 (SRS).

Belongs to the azoreductase type 1 family. Homodimer. Requires FMN as cofactor.

The enzyme catalyses 2 a quinone + NADH + H(+) = 2 a 1,4-benzosemiquinone + NAD(+). It catalyses the reaction N,N-dimethyl-1,4-phenylenediamine + anthranilate + 2 NAD(+) = 2-(4-dimethylaminophenyl)diazenylbenzoate + 2 NADH + 2 H(+). Quinone reductase that provides resistance to thiol-specific stress caused by electrophilic quinones. In terms of biological role, also exhibits azoreductase activity. Catalyzes the reductive cleavage of the azo bond in aromatic azo compounds to the corresponding amines. This chain is FMN-dependent NADH:quinone oxidoreductase 2, found in Listeria innocua serovar 6a (strain ATCC BAA-680 / CLIP 11262).